The following is a 313-amino-acid chain: Protein-methionine-sulfoxide reductase catalytic subunit MsrP (313 aa).

The tat-type signal signal peptide spans 1–44 (MARWRPDTAEREATPEALYLRRREFLALGAAGAVGLLLPRGARA). Mo-molybdopterin contacts are provided by residues N76, 79–80 (YE), C134, T169, N217, R222, and 233–235 (GAK).

The protein belongs to the MsrP family. In terms of assembly, heterodimer of a catalytic subunit (MsrP) and a heme-binding subunit (MsrQ). Mo-molybdopterin serves as cofactor. In terms of processing, predicted to be exported by the Tat system. The position of the signal peptide cleavage has not been experimentally proven.

The protein resides in the periplasm. The enzyme catalyses L-methionyl-[protein] + a quinone + H2O = L-methionyl-(S)-S-oxide-[protein] + a quinol. The catalysed reaction is L-methionyl-[protein] + a quinone + H2O = L-methionyl-(R)-S-oxide-[protein] + a quinol. In terms of biological role, part of the MsrPQ system that repairs oxidized periplasmic proteins containing methionine sulfoxide residues (Met-O), using respiratory chain electrons. Thus protects these proteins from oxidative-stress damage caused by reactive species of oxygen and chlorine generated by the host defense mechanisms. MsrPQ is essential for the maintenance of envelope integrity under bleach stress, rescuing a wide series of structurally unrelated periplasmic proteins from methionine oxidation. The catalytic subunit MsrP is non-stereospecific, being able to reduce both (R-) and (S-) diastereoisomers of methionine sulfoxide. This Anaeromyxobacter dehalogenans (strain 2CP-C) protein is Protein-methionine-sulfoxide reductase catalytic subunit MsrP.